The following is a 213-amino-acid chain: Adenylate kinase (213 aa).

10-15 is a binding site for ATP; that stretch reads GSGKGT. Residues 30–59 form an NMP region; it reads SVGDLLRNIISSSSELGKKIKGTVESGNLI. Residues Arg36, 57 to 59, 83 to 86, and Gln90 contribute to the AMP site; these read NLI and GFPR. The segment at 125 to 160 is LID; that stretch reads NRLACLDCKSIYSVSSFKSTTCAKCKSTRLEKRIDD. Arg126 is an ATP binding site. Positions 129 and 132 each coordinate Zn(2+). Position 135 to 136 (135 to 136) interacts with ATP; that stretch reads IY. Cys146 and Cys149 together coordinate Zn(2+). AMP is bound by residues Arg157 and Arg169. ATP is bound at residue Leu195.

It belongs to the adenylate kinase family. As to quaternary structure, monomer.

Its subcellular location is the cytoplasm. The enzyme catalyses AMP + ATP = 2 ADP. It functions in the pathway purine metabolism; AMP biosynthesis via salvage pathway; AMP from ADP: step 1/1. Catalyzes the reversible transfer of the terminal phosphate group between ATP and AMP. Plays an important role in cellular energy homeostasis and in adenine nucleotide metabolism. This is Adenylate kinase from Wolbachia sp. subsp. Drosophila simulans (strain wRi).